A 290-amino-acid polypeptide reads, in one-letter code: Acetylglutamate kinase (290 aa).

Residues 72–73 (GG), Arg94, and Asn187 contribute to the substrate site.

It belongs to the acetylglutamate kinase family. ArgB subfamily.

It is found in the plastid. The protein resides in the chloroplast. The catalysed reaction is N-acetyl-L-glutamate + ATP = N-acetyl-L-glutamyl 5-phosphate + ADP. Its pathway is amino-acid biosynthesis; L-arginine biosynthesis; N(2)-acetyl-L-ornithine from L-glutamate: step 2/4. Functionally, catalyzes the ATP-dependent phosphorylation of N-acetyl-L-glutamate. This is Acetylglutamate kinase from Cyanidioschyzon merolae (strain NIES-3377 / 10D) (Unicellular red alga).